The primary structure comprises 210 residues: Cytidylate kinase (210 aa).

An ATP-binding site is contributed by 9–17 (GPAAAGKGT).

This sequence belongs to the cytidylate kinase family. Type 1 subfamily.

It is found in the cytoplasm. It carries out the reaction CMP + ATP = CDP + ADP. The catalysed reaction is dCMP + ATP = dCDP + ADP. The polypeptide is Cytidylate kinase (Agrobacterium fabrum (strain C58 / ATCC 33970) (Agrobacterium tumefaciens (strain C58))).